Reading from the N-terminus, the 204-residue chain is UPF0637 protein lmo1065 (204 aa).

The protein belongs to the UPF0637 family.

The sequence is that of UPF0637 protein lmo1065 from Listeria monocytogenes serovar 1/2a (strain ATCC BAA-679 / EGD-e).